Reading from the N-terminus, the 630-residue chain is A disintegrin and metalloproteinase with thrombospondin motifs 4 (630 aa).

The propeptide occupies 1-5 (RRTKR). The 211-residue stretch at 11–221 (RFVETLVVAD…GYGHCLLDKP (211 aa)) folds into the Peptidase M12B domain. 11 disulfide bridges follow: Cys86–Cys138, Cys115–Cys120, Cys132–Cys216, Cys170–Cys200, Cys242–Cys265, Cys253–Cys275, Cys260–Cys294, Cys288–Cys299, Cys325–Cys362, Cys329–Cys367, and Cys340–Cys352. Asn96 carries an N-linked (GlcNAc...) asparagine glycan. Residue His154 coordinates Zn(2+). The active site involves Glu155. Zn(2+)-binding residues include His158 and His164. The region spanning 233-303 (GKDYDADRQC…CMGGRCLHVD (71 aa)) is the Disintegrin domain. The TSP type-1 domain maps to 313-368 (AGGWGPWGPWGDCSRTCGGGVQFSSRDCTKPVPRNGGKYCEGRRTPFRSCNTKNCP). A glycan (N-linked (GlcNAc...) asparagine) is linked at Asn474. The spacer stretch occupies residues 479-630 (SKQSGSFKKF…LRKRTWAGRK (152 aa)).

In terms of assembly, interacts with SRPX2. Zn(2+) serves as cofactor. In terms of processing, the precursor is cleaved by a furin endopeptidase. Post-translationally, glycosylated. Can be O-fucosylated by POFUT2 on a serine or a threonine residue found within the consensus sequence C1-X(2)-(S/T)-C2-G of the TSP type-1 repeat domains where C1 and C2 are the first and second cysteine residue of the repeat, respectively. Fucosylated repeats can then be further glycosylated by the addition of a beta-1,3-glucose residue by the glucosyltransferase, B3GALTL. Fucosylation mediates the efficient secretion of ADAMTS family members. Can also be C-glycosylated with one or two mannose molecules on tryptophan residues within the consensus sequence W-X-X-W of the TPRs, and N-glycosylated. These other glycosylations can also facilitate secretion. In terms of tissue distribution, brain specific.

Its subcellular location is the secreted. It is found in the extracellular space. The protein localises to the extracellular matrix. The enzyme catalyses Glutamyl endopeptidase. Bonds cleaved include 370-Thr-Glu-Gly-Glu-|-Ala-Arg-Gly-Ser-377 in the interglobular domain of mammalian aggrecan.. Cleaves aggrecan, a cartilage proteoglycan, at the '392-Glu-|-Ala-393' site and may be involved in its turnover. Also cleaves COMP. May play an important role in the destruction of aggrecan in arthritic diseases. The chain is A disintegrin and metalloproteinase with thrombospondin motifs 4 (Adamts4) from Rattus norvegicus (Rat).